A 769-amino-acid chain; its full sequence is Transferrin receptor protein 1 (769 aa).

Over 1 to 70 the chain is Cytoplasmic; the sequence is MMDQARSAFS…KPKRFNGFIC (70 aa). Residues 1-70 are mediates interaction with SH3BP4; the sequence is MMDQARSAFS…KPKRFNGFIC (70 aa). Ser-10 and Ser-19 each carry phosphoserine. Tyr-20 is subject to Phosphotyrosine. Residues 20-23 carry the Endocytosis signal motif; it reads YTRF. Residue Thr-21 is modified to Phosphothreonine. Ser-24 is subject to Phosphoserine. Positions 61 to 64 match the Stop-transfer sequence motif; sequence KPKR. A lipid anchor (S-palmitoyl cysteine) is attached at Cys-70. Residues 71–91 traverse the membrane as a helical; Signal-anchor for type II membrane protein segment; the sequence is YGTIAIILFFLIGFMIGYLGY. Residues 92-769 lie on the Extracellular side of the membrane; sequence CKRVEAKSEC…GDIWDIDNEF (678 aa). The O-linked (GalNAc...) threonine glycan is linked to Thr-107. The PA domain occupies 232 to 322; sequence SKAATVTGRL…GTGDPYTPGF (91 aa). Asn-260 and Asn-326 each carry an N-linked (GlcNAc...) asparagine glycan. A ligand-binding region spans residues 578-769; the sequence is TMDVYEKLIQ…GDIWDIDNEF (192 aa). The Cell attachment site motif lies at 655–657; it reads RGD. N-linked (GlcNAc...) asparagine glycans are attached at residues Asn-731 and Asn-736.

It belongs to the peptidase M28 family. M28B subfamily. Homodimer; disulfide-linked. Binds one transferrin molecule per subunit. Interacts with SH3BP4. Homodimer; disulfide-linked. Binds one transferrin or HFE molecule per subunit. Binds the HLA class II histocompatibility antigen, DR1. Interacts with SH3BP3. Interacts with STEAP3; facilitates TFRC endocytosis in erythroid precursor cells. Stearoylated by ZDHHC6 which inhibits TFRC-mediated activation of the JNK pathway and promotes mitochondrial fragmentation. Stearoylation does not affect iron uptake. In terms of processing, N- and O-glycosylated, phosphorylated and palmitoylated.

The protein resides in the cell membrane. Its subcellular location is the melanosome. Functionally, cellular uptake of iron occurs via receptor-mediated endocytosis of ligand-occupied transferrin receptor into specialized endosomes. Endosomal acidification leads to iron release. The apotransferrin-receptor complex is then recycled to the cell surface with a return to neutral pH and the concomitant loss of affinity of apotransferrin for its receptor. Transferrin receptor is necessary for development of erythrocytes and the nervous system. Positively regulates T and B cell proliferation through iron uptake. Acts as a lipid sensor that regulates mitochondrial fusion by regulating activation of the JNK pathway. When dietary levels of stearate (C18:0) are low, promotes activation of the JNK pathway, resulting in HUWE1-mediated ubiquitination and subsequent degradation of the mitofusin MFN2 and inhibition of mitochondrial fusion. When dietary levels of stearate (C18:0) are high, TFRC stearoylation inhibits activation of the JNK pathway and thus degradation of the mitofusin MFN2. Mediates uptake of NICOL1 into fibroblasts where it may regulate extracellular matrix production. The chain is Transferrin receptor protein 1 (TFRC) from Felis catus (Cat).